Here is a 388-residue protein sequence, read N- to C-terminus: Chorismate synthase (388 aa).

2 residues coordinate NADP(+): Arg39 and Arg45. Residues 132 to 134, 251 to 252, Gly296, 311 to 315, and Arg337 each bind FMN; these read RSS, NA, and KPIPT.

This sequence belongs to the chorismate synthase family. In terms of assembly, homotetramer. It depends on FMNH2 as a cofactor.

It carries out the reaction 5-O-(1-carboxyvinyl)-3-phosphoshikimate = chorismate + phosphate. It participates in metabolic intermediate biosynthesis; chorismate biosynthesis; chorismate from D-erythrose 4-phosphate and phosphoenolpyruvate: step 7/7. Its function is as follows. Catalyzes the anti-1,4-elimination of the C-3 phosphate and the C-6 proR hydrogen from 5-enolpyruvylshikimate-3-phosphate (EPSP) to yield chorismate, which is the branch point compound that serves as the starting substrate for the three terminal pathways of aromatic amino acid biosynthesis. This reaction introduces a second double bond into the aromatic ring system. This is Chorismate synthase from Staphylococcus aureus (strain COL).